The chain runs to 228 residues: MGGTSAAVPSHGLACAPPAAVTLNPRARRRRASSGSGGHRSSPQQPLRSDLLPPATVACRARSQSASSSNVNFGRGDDADKLLEDLLKQHGEVVYSSGGPPDPTVEADDDAECLSFAVSLAKAASEIKATDIRVLCVRRLVYWTRFFIILTAFSNAQIDAISSKMRDIGEKQFSKVASGDTKPNSWTLLDFGDVVVHIFLPQQRAFYNLEEFYGNATPIELPFDTQRQ.

Residues Met-1 to Pro-54 form a disordered region. A chloroplast-targeting transit peptide spans Met-1 to Arg-62.

It belongs to the Iojap/RsfS family. As to quaternary structure, interacts with chloroplast ribosomal protein uL14c (rpl14).

Its subcellular location is the plastid. It is found in the chloroplast. Functionally, may be a ribosome silencing factor (Potential). Involved in plastid biogenesis. Plastids affected by a mutation in Iojap lose the ability to perform translation and lack plastid ribosomes. The chain is Protein Iojap, chloroplastic (Ij) from Zea mays (Maize).